The primary structure comprises 124 residues: Small ribosomal subunit protein bS6 (124 aa).

It belongs to the bacterial ribosomal protein bS6 family.

Functionally, binds together with bS18 to 16S ribosomal RNA. The polypeptide is Small ribosomal subunit protein bS6 (Haemophilus ducreyi (strain 35000HP / ATCC 700724)).